A 393-amino-acid polypeptide reads, in one-letter code: Lipid-A-disaccharide synthase (393 aa).

It belongs to the LpxB family.

The enzyme catalyses a lipid X + a UDP-2-N,3-O-bis[(3R)-3-hydroxyacyl]-alpha-D-glucosamine = a lipid A disaccharide + UDP + H(+). It participates in bacterial outer membrane biogenesis; LPS lipid A biosynthesis. Condensation of UDP-2,3-diacylglucosamine and 2,3-diacylglucosamine-1-phosphate to form lipid A disaccharide, a precursor of lipid A, a phosphorylated glycolipid that anchors the lipopolysaccharide to the outer membrane of the cell. This chain is Lipid-A-disaccharide synthase, found in Bordetella bronchiseptica (strain ATCC BAA-588 / NCTC 13252 / RB50) (Alcaligenes bronchisepticus).